We begin with the raw amino-acid sequence, 382 residues long: Lipid-A-disaccharide synthase (382 aa).

Belongs to the LpxB family.

It catalyses the reaction 2-N,3-O-bis[(3R)-3-hydroxytetradecanoyl]-alpha-D-glucosaminyl 1-phosphate + UDP-2-N,3-O-bis[(3R)-3-hydroxytetradecanoyl]-alpha-D-glucosamine = lipid A disaccharide (E. coli) + UDP + H(+). It carries out the reaction a lipid X + a UDP-2-N,3-O-bis[(3R)-3-hydroxyacyl]-alpha-D-glucosamine = a lipid A disaccharide + UDP + H(+). It participates in glycolipid biosynthesis; lipid IV(A) biosynthesis; lipid IV(A) from (3R)-3-hydroxytetradecanoyl-[acyl-carrier-protein] and UDP-N-acetyl-alpha-D-glucosamine: step 5/6. Condensation of UDP-2,3-diacylglucosamine and 2,3-diacylglucosamine-1-phosphate to form lipid A disaccharide, a precursor of lipid A, a phosphorylated glycolipid that anchors the lipopolysaccharide to the outer membrane of the cell. The chain is Lipid-A-disaccharide synthase from Escherichia coli (strain K12 / MC4100 / BW2952).